The sequence spans 73 residues: Large ribosomal subunit protein bL31 (73 aa).

It belongs to the bacterial ribosomal protein bL31 family. Type A subfamily. In terms of assembly, part of the 50S ribosomal subunit.

Its function is as follows. Binds the 23S rRNA. In Rhizobium johnstonii (strain DSM 114642 / LMG 32736 / 3841) (Rhizobium leguminosarum bv. viciae), this protein is Large ribosomal subunit protein bL31.